Consider the following 170-residue polypeptide: Putative 5'(3')-deoxyribonucleotidase (170 aa).

Catalysis depends on D28, which acts as the Nucleophile. Mg(2+) is bound by residues D28, D30, and D134. The Proton donor role is filled by D30.

This sequence belongs to the 5'(3')-deoxyribonucleotidase family. It depends on Mg(2+) as a cofactor.

Functionally, dephosphorylates the 5' and 2'(3')-phosphates of deoxyribonucleotides. The chain is Putative 5'(3')-deoxyribonucleotidase from Vibrio parahaemolyticus (KVP40).